A 337-amino-acid polypeptide reads, in one-letter code: Glyceraldehyde-3-phosphate dehydrogenase (337 aa).

NAD(+) is bound by residues 11 to 12 (TI) and glycine 110. A D-glyceraldehyde 3-phosphate-binding site is contributed by 139-141 (SCN). Cysteine 140 (nucleophile) is an active-site residue. Arginine 168 serves as a coordination point for NAD(+). 194–195 (HG) is a D-glyceraldehyde 3-phosphate binding site. Glutamine 301 is an NAD(+) binding site.

The protein belongs to the glyceraldehyde-3-phosphate dehydrogenase family. As to quaternary structure, homotetramer.

The protein localises to the cytoplasm. It catalyses the reaction D-glyceraldehyde 3-phosphate + phosphate + NADP(+) = (2R)-3-phospho-glyceroyl phosphate + NADPH + H(+). The enzyme catalyses D-glyceraldehyde 3-phosphate + phosphate + NAD(+) = (2R)-3-phospho-glyceroyl phosphate + NADH + H(+). Its pathway is carbohydrate degradation; glycolysis; pyruvate from D-glyceraldehyde 3-phosphate: step 1/5. The polypeptide is Glyceraldehyde-3-phosphate dehydrogenase (gap) (Methanothermobacter thermautotrophicus (strain ATCC 29096 / DSM 1053 / JCM 10044 / NBRC 100330 / Delta H) (Methanobacterium thermoautotrophicum)).